The sequence spans 208 residues: Large ribosomal subunit protein uL3 (208 aa).

The tract at residues 130 to 168 (GGSKTHGQSDRLRAPGSVGGSSFPSRTFKGQRMAGRKGS) is disordered.

Belongs to the universal ribosomal protein uL3 family. In terms of assembly, part of the 50S ribosomal subunit. Forms a cluster with proteins L14 and L19.

One of the primary rRNA binding proteins, it binds directly near the 3'-end of the 23S rRNA, where it nucleates assembly of the 50S subunit. This is Large ribosomal subunit protein uL3 from Chloroherpeton thalassium (strain ATCC 35110 / GB-78).